Here is a 187-residue protein sequence, read N- to C-terminus: UPF0301 protein Sbal195_3177 (187 aa).

This sequence belongs to the UPF0301 (AlgH) family.

This is UPF0301 protein Sbal195_3177 from Shewanella baltica (strain OS195).